A 134-amino-acid polypeptide reads, in one-letter code: Large ribosomal subunit protein uL14 (134 aa).

Belongs to the universal ribosomal protein uL14 family. As to quaternary structure, in the 70S ribosome, L14 and L19 interact and together make contacts with the 16S rRNA in bridges B5 and B8. Part of the 50S ribosomal subunit. Forms a cluster with proteins L3 and L19.

Its function is as follows. Forms part of two intersubunit bridges in the 70S ribosome. Binds to 23S rRNA. The chain is Large ribosomal subunit protein uL14 from Deinococcus radiodurans (strain ATCC 13939 / DSM 20539 / JCM 16871 / CCUG 27074 / LMG 4051 / NBRC 15346 / NCIMB 9279 / VKM B-1422 / R1).